We begin with the raw amino-acid sequence, 250 residues long: Short-chain dehydrogenase RED3 (250 aa).

I16, S35, E63, and N91 together coordinate NADP(+). Residues S145 and Y164 each act as proton donor in the active site. Positions 164, 168, 195, and 197 each coordinate NADP(+). K168 serves as the catalytic Lowers pKa of active site Tyr.

Belongs to the short-chain dehydrogenases/reductases (SDR) family.

Its pathway is polyketide biosynthesis. In terms of biological role, short-chain dehydrogenase; part of the gene cluster that mediates the biosynthesis of pyriculol and pyriculariol, two heptaketides that induce lesion formation upon application on rice leaves but are dispensable for pathogenicity. The highly reducing polyketide synthase synthesizes the heptaketide backbone of pyriculol and pyriculariol. Pyriculol and pyriculariol contain several hydroxyl moieties and double bonds, so it can be assumed that several reduction steps occur during biosynthesis. These reactions could be executed by PKS19 itself or partly by the tailoring enzymes OXR1, OXR2, RED1, RED2 or RED3, identified within the cluster. The FAD-linked oxidoreductase OXR1 is the only tailoring enzyme for which the function has been determined yet, and is involved in the oxidation of dihydropyriculol and dihydropyriculariol into pyriculol and pyriculariol, respectively. The sequence is that of Short-chain dehydrogenase RED3 from Pyricularia oryzae (strain 70-15 / ATCC MYA-4617 / FGSC 8958) (Rice blast fungus).